A 339-amino-acid polypeptide reads, in one-letter code: MQTLQTTSLRVVDNKLWILDQQALPQQKNWLPADNTEALVGHIHALRVRGAPLIGLSASLLLALLAEHGMTRDALGQALEVLRAARPTAVNLMNNLDRMKQALTQPDFVAALGAEALRLVQEDRELCERIARAGSELVKPGSRLLTHCNTGGLATAGVGTALGVIARAHEAGKVANVWVDETRPLLQGGRLTAWELGELGVPYQLITDSMAASLMAQGQVDAVWVGADRIAANGDVANKIGTYSLAVLAKFHNVPFYVAAPQTTLDPACPNGAAIPIEQRAAAEVTGVAGSFGAVQWAPEDARVYNPAFDVTPAALISGWVLDSGVVTPEDVANGRFAG.

Substrate contacts are provided by residues 49-51 (RGA), Arg86, and Gln187. The active-site Proton donor is Asp228. 238–239 (NK) provides a ligand contact to substrate.

This sequence belongs to the eIF-2B alpha/beta/delta subunits family. MtnA subfamily.

The enzyme catalyses 5-(methylsulfanyl)-alpha-D-ribose 1-phosphate = 5-(methylsulfanyl)-D-ribulose 1-phosphate. Its pathway is amino-acid biosynthesis; L-methionine biosynthesis via salvage pathway; L-methionine from S-methyl-5-thio-alpha-D-ribose 1-phosphate: step 1/6. Functionally, catalyzes the interconversion of methylthioribose-1-phosphate (MTR-1-P) into methylthioribulose-1-phosphate (MTRu-1-P). The chain is Methylthioribose-1-phosphate isomerase from Cronobacter sakazakii (strain ATCC BAA-894) (Enterobacter sakazakii).